We begin with the raw amino-acid sequence, 195 residues long: Imidazoleglycerol-phosphate dehydratase (195 aa).

The protein belongs to the imidazoleglycerol-phosphate dehydratase family.

It is found in the cytoplasm. The catalysed reaction is D-erythro-1-(imidazol-4-yl)glycerol 3-phosphate = 3-(imidazol-4-yl)-2-oxopropyl phosphate + H2O. Its pathway is amino-acid biosynthesis; L-histidine biosynthesis; L-histidine from 5-phospho-alpha-D-ribose 1-diphosphate: step 6/9. The chain is Imidazoleglycerol-phosphate dehydratase from Alkaliphilus metalliredigens (strain QYMF).